Here is a 75-residue protein sequence, read N- to C-terminus: Large ribosomal subunit protein bL31 (75 aa).

The protein belongs to the bacterial ribosomal protein bL31 family. Type A subfamily. As to quaternary structure, part of the 50S ribosomal subunit.

Functionally, binds the 23S rRNA. The protein is Large ribosomal subunit protein bL31 of Chlorobium phaeobacteroides (strain BS1).